A 224-amino-acid chain; its full sequence is 3-dehydroquinate dehydratase (224 aa).

3-dehydroquinate contacts are provided by residues 35-37 and arginine 65; that span reads EFR. Residue histidine 120 is the Proton donor/acceptor of the active site. The active-site Schiff-base intermediate with substrate is lysine 146. Residues arginine 183, threonine 202, and glutamine 206 each coordinate 3-dehydroquinate.

It belongs to the type-I 3-dehydroquinase family. Homodimer.

The enzyme catalyses 3-dehydroquinate = 3-dehydroshikimate + H2O. The protein operates within metabolic intermediate biosynthesis; chorismate biosynthesis; chorismate from D-erythrose 4-phosphate and phosphoenolpyruvate: step 3/7. Involved in the third step of the chorismate pathway, which leads to the biosynthesis of aromatic amino acids. Catalyzes the cis-dehydration of 3-dehydroquinate (DHQ) and introduces the first double bond of the aromatic ring to yield 3-dehydroshikimate. This chain is 3-dehydroquinate dehydratase, found in Methanobrevibacter smithii (strain ATCC 35061 / DSM 861 / OCM 144 / PS).